We begin with the raw amino-acid sequence, 860 residues long: Leucine-rich repeat and death domain-containing protein 1 (860 aa).

A disordered region spans residues 1-103 (MSEKEGMSEV…TGTSQSLSSL (103 aa)). Residues 50–72 (KSSNQIYETHPRQNTLESTSSSG) are compositionally biased toward polar residues. Residues 90–103 (TSTRTGTSQSLSSL) show a composition bias toward low complexity. LRR repeat units follow at residues 139 to 163 (LGAD…ILKI), 164 to 186 (KYVK…DSGD), 187 to 210 (LLGL…IQLL), 211 to 233 (HNLR…ISQL), 235 to 256 (NIRQ…LECL), 257 to 279 (GNLE…LPSL), 281 to 302 (TLRV…LCFL), 303 to 325 (PKLI…IREL), 326 to 348 (KNLE…IFQL), 350 to 371 (KIKE…IENF), 372 to 394 (RELR…ISCC), 396 to 417 (MLEC…IHKL), 419 to 440 (NLRK…ISHL), 441 to 463 (NNIC…IKNC), 465 to 486 (KIIK…LCAL), 487 to 510 (DSLY…SFSK), 512 to 532 (LLHL…FCSL), 533 to 555 (INLK…ISNM), 557 to 578 (SLHV…LCTL), 579 to 601 (ENLQ…ICNL), 603 to 624 (GIQK…LCQL), 627 to 650 (LEQL…LSNM), 651 to 673 (TQLK…IGEL), 675 to 696 (NLVS…LLSL), 697 to 719 (NDLQ…IYNI), and 721 to 742 (SLKE…ICKG). Residues 764-852 (EKIFKIVANN…EIMDKITALN (89 aa)) enclose the Death domain. One copy of the LRR 27 repeat lies at 856–860 (RAIKF).

The protein is Leucine-rich repeat and death domain-containing protein 1 (LRRD1) of Homo sapiens (Human).